The following is a 555-amino-acid chain: Glutamine--tRNA ligase (555 aa).

The 'HIGH' region signature appears at 34 to 44 (PEPNGYLHIGH). ATP is bound by residues 35 to 37 (EPN) and 41 to 47 (HIGHAKS). L-glutamine is bound by residues Asp-67 and Tyr-212. Residues Thr-231, 261–262 (RL), and 269–271 (MSK) each bind ATP. Positions 268–272 (VMSKR) match the 'KMSKS' region motif. Residues 317-324 (TKQDNTIE) form an interaction with tRNA region.

It belongs to the class-I aminoacyl-tRNA synthetase family. Monomer.

The protein resides in the cytoplasm. The enzyme catalyses tRNA(Gln) + L-glutamine + ATP = L-glutaminyl-tRNA(Gln) + AMP + diphosphate. The sequence is that of Glutamine--tRNA ligase from Citrobacter koseri (strain ATCC BAA-895 / CDC 4225-83 / SGSC4696).